Consider the following 388-residue polypeptide: Omega-hydroxy-beta-dihydromenaquinone-9 sulfotransferase Stf3 (388 aa).

The protein belongs to the Stf3 family.

It carries out the reaction omega-hydroxy-beta-dihydromenaquinone-9 + 3'-phosphoadenylyl sulfate = omega-sulfo-beta-dihydromenaquinone-9 + adenosine 3',5'-bisphosphate + H(+). Its function is as follows. Involved in the biosynthesis of sulfomenaquinone (SMK, initially named S881 on the basis of its mass), which is localized in the outer envelope of M.bovis and negatively regulates its virulence. Catalyzes the transfer of a sulfonate group from 3'-phosphoadenosine-5'-phosphosulfate (PAPS) to omega-hydroxy-beta-dihydromenaquinone-9, generating omega-sulfo-beta-dihydromenaquinone-9 (sulfomenaquinone). The protein is Omega-hydroxy-beta-dihydromenaquinone-9 sulfotransferase Stf3 of Mycobacterium bovis (strain ATCC BAA-935 / AF2122/97).